The following is a 515-amino-acid chain: Protein disulfide-isomerase (515 aa).

An N-terminal signal peptide occupies residues 1–22; sequence MAVVRVRAIVALLCLVAALGLA. Thioredoxin domains lie at 23–139 and 351–480; these read EPLE…KRTG and FLEG…SGGQ. Catalysis depends on nucleophile residues Cys-58, Cys-61, Cys-402, and Cys-405. 2 disulfide bridges follow: Cys-58/Cys-61 and Cys-402/Cys-405. A disordered region spans residues 477-515; sequence SGGQDGAAADDDLEDLETDEETDLEEGDDDEQKIQKDEL. Acidic residues predominate over residues 484-507; that stretch reads AADDDLEDLETDEETDLEEGDDDE. The Prevents secretion from ER signature appears at 512–515; the sequence is KDEL.

It belongs to the protein disulfide isomerase family. As to quaternary structure, heterodimer; heterodimerizes with the protein microsomal triglyceride transfer MTTP. Homodimer. Monomers and homotetramers may also occur. Also constitutes the structural subunit of prolyl 4-hydroxylase. Stabilizes this enzyme and retains it in the ER without contributing to the catalytic activity. Binds UBQLN1.

The protein resides in the endoplasmic reticulum. The protein localises to the endoplasmic reticulum lumen. It is found in the cell membrane. It carries out the reaction Catalyzes the rearrangement of -S-S- bonds in proteins.. Functionally, this multifunctional protein catalyzes the formation, breakage and rearrangement of disulfide bonds. At the cell surface, seems to act as a reductase that cleaves disulfide bonds of proteins attached to the cell. May therefore cause structural modifications of exofacial proteins. Inside the cell, seems to form/rearrange disulfide bonds of nascent proteins. At high concentrations, functions as a chaperone that inhibits aggregation of misfolded proteins. At low concentrations, facilitates aggregation (anti-chaperone activity). Also acts a structural subunit of various enzymes such as prolyl 4-hydroxylase. This Gallus gallus (Chicken) protein is Protein disulfide-isomerase (P4HB).